A 211-amino-acid polypeptide reads, in one-letter code: Imidazole glycerol phosphate synthase subunit HisH (211 aa).

In terms of domain architecture, Glutamine amidotransferase type-1 spans 3–211; sequence VVAVIDYEMG…VSQVREKIAA (209 aa). Cys-81 functions as the Nucleophile in the catalytic mechanism. Active-site residues include His-186 and Glu-188.

Heterodimer of HisH and HisF.

It localises to the cytoplasm. It carries out the reaction 5-[(5-phospho-1-deoxy-D-ribulos-1-ylimino)methylamino]-1-(5-phospho-beta-D-ribosyl)imidazole-4-carboxamide + L-glutamine = D-erythro-1-(imidazol-4-yl)glycerol 3-phosphate + 5-amino-1-(5-phospho-beta-D-ribosyl)imidazole-4-carboxamide + L-glutamate + H(+). It catalyses the reaction L-glutamine + H2O = L-glutamate + NH4(+). Its pathway is amino-acid biosynthesis; L-histidine biosynthesis; L-histidine from 5-phospho-alpha-D-ribose 1-diphosphate: step 5/9. IGPS catalyzes the conversion of PRFAR and glutamine to IGP, AICAR and glutamate. The HisH subunit catalyzes the hydrolysis of glutamine to glutamate and ammonia as part of the synthesis of IGP and AICAR. The resulting ammonia molecule is channeled to the active site of HisF. The polypeptide is Imidazole glycerol phosphate synthase subunit HisH (Trichormus variabilis (strain ATCC 29413 / PCC 7937) (Anabaena variabilis)).